A 2498-amino-acid chain; its full sequence is MSSSGYPPNQGAFSTEQGRYSSHPVQYTFPSSRHQQEYSVSEYRTAHLEASQLIQQQQLRRRPSLLSEFHPVSDRPQDRRSGYDQQYHSISQNEHEALESKRPRLDQVSDSHYRLNPAMVLLVPTIQEGVRVQSEVKKEQGLSSKHESSSSPLSGQPGDDQDASPSKLSKEELIQSMDRVDREIAKVEQQILKLKKKQQQLEEEAAKPPEPEKPVSPPPVEQKHRSVVQIIYDENRKKAEEAHKFLEGLGPKVELPLYNQPSDTKVYHENIKTNQVMRKKLILFFKRRNHARKLREQNICQRYDQLMEAWEKKVDRIENNPRRKAKESKTREYYEKQFPEIRKQREQQERFQRVGQRGTGMSATIARSEHEISEIIDGLSEQENNEKQMRQLSVIPPMMFDAEQRRVKFINTNGLMEDPMKVYKDRQFMNVWTDHEKEIFKEKFVRHPKNFGLIASYLERKNVSDCVLYYYLTKKNENLKSLVRRNYPKRRGRNQQQITRPSQEEKEIEKVEEEKADRNDKKEDERREEEEKEEKEELREGAKDKIDAVAEDGDEKDQSMPRGRKTANNQGRRKGRVTRSMASEAAAANAVTTATTAPVTTTSTATTVAPVPVAPPPEEPTPPPPPQEQSLVDHGRNWGAIAKMVGSKSESQCKNFYFNYKRRHNLDNLLQQHKQKSSRRPREERDVSQCDSIASTVSAQEDDENEASNEEENPEDSEGAENSSDTESAPSPSPAEAARLGDDSVDRTTSSVSMEAPPEQDAASKPASDSSPSPIVENTKPPETQYAELKVKEEISTENEQTMEVEERSQSAELKSALNLQVQTKAEPYETEAKPTESTTQVKTEVDSKEDDSMERLMDRAEAADMGYAPPQNISQARQESQPDNDSSATCSADEEVDGEPDRPRMYSFGSRPSLLNQAGTFLKQGPMDLQQLQHRAAVIPPMTSCSPCNLTTGTAIAASNFSMYQRHLYENSLLEEQRQRQEQLTLENRMSASPGNMSKSPNMDWEGKSVYMPYTEVKHPFEHEAQMQNVARSVSPYRLSPRDVGRVSPQVDMNPSRYCVPPVLQPAPHQVITSLSDSARLPVTRPTRPPPPLIPSSKTSATSSDKPSFITGGSISQGTPGTYLASLSQPYSQETLKPSVGSISLGLPRQHESTKIGCVTYIKQEEFPSRGQSSQPEGLLVRAQHEGVVRGSMAAIQEGSIARGTPATKVPLEAVSTLRGSITQGTPALSQSGIAADVLLKSTITRLAAEDIGSPERCREDTSAKGHVIYEGKSGHIVSYDTIKNMREGTRSPRTAPEVALKRAYDTMEGNIKQAMSVREAAVSGPMEGLICRTLPKGSPHPELKDRQVLSGSIMKGTPRTTSDNFDDGLKYAKQIKLESPPIRSFEGAISKGKPYEGVTTIKELGRSIHEIPRQDLVSQESRKTPESSRQIMEGSISQGTPIKYESTSGQSAIKHNVKSLITGPSNLSWGVPQMDNMPENLKMGERSKHEDTKSSDAIRSRHTSVVSSGPSVLRSTLHEASKSQLSPGIYEDNNARRTPVNYPSPMSRSSPMARSAEGCLTPSKSSSHERKSTLTPTQRESIVVKSPVPGVDPSAAHSPFDTHLRSAPPGDVYRAHLPPHLDPALQFHRPLDPAAAAYLFQRQLSPTPGYPSQYQLYAMENTRQTILNDYITSQQMQVNLRPDVARGLSPRDQGLGIPYPGARGIIDLTNMPPAILVPHPGGTSTPPMDRITYIPGTQLAFPPRPYNPASMSPGHPAHLANSVSAERERERERERERDREREKEQRERESDRERERDRLAHAAAAAAAASAPSEHYLRPVSEQPSRPSSRPSSHGYVRSPSPSVRAQESIMQQRPSIFLGTNGKSVITPLDAAQFRIMPPTPGAASITQGIPASRYSTAADALAALVDAATSAPQMEVAKPKESKNDSARSEENLSRRNALEQQQQIDCERRVMQSPYTSSSFSSSKSQSQPSSAVYSEAGKERTAHTKSRYVEELRMRGKTTITAANFIDVIITQQIASDKDGRERNSQSSDASSSHSSHRYEAPRETIEVISPANSPVQEKESYPQEMPKSSQTETGEGSRKYDGQPNRYRQQQESPPQQTIPGHVPQTHRLITLADHICHIITQDFARNQPVNQPLQQPPASTFQSTNPTSTAVRTKASSRFSPESQVQPMHSPRPASRVSPENIPDKPRGRPGKSPDRGHISEPYEPISPPQAPMLHTKQDNMMLLSQRQEPPEQRNDSRSPGNINYLPSFFTKLENTSPMVMYKKQEIFRKLNSSGGGDSDMAAAQPGTEIFNLPAVTTSGAISSRGHSFADPASNLGLEDIIRKALMGNFDDKSEDHGVLVGVPQGNQSGTPNSEARREEANPSPNSGGGTHKQKLISKYGSRKTKSPISGSQTYLGAERPSSVSSVHSEGDYRQASAWAWEDRPSSTGSTQFPYNPLTMGMLNSTPPSSMSCIPTSMTQTSAHQQSRIWEREPAPLLSEQYETLSDSDE.

Disordered regions lie at residues 1–38 (MSSS…QQEY), 54–84 (IQQQ…SGYD), 134–169 (SEVK…SKLS), and 198–223 (QQQL…VEQK). Basic and acidic residues-rich tracts occupy residues 71 to 82 (PVSDRPQDRRSG), 134 to 148 (SEVK…KHES), and 204 to 213 (EAAKPPEPEK). Residues 154 to 304 (SGQPGDDQDA…REQNICQRYD (151 aa)) are interaction with tbl1xr1-A. Positions 168 to 208 (LSKEELIQSMDRVDREIAKVEQQILKLKKKQQQLEEEAAKP) form a coiled coil. Positions 427-478 (QFMNVWTDHEKEIFKEKFVRHPKNFGLIASYLERKNVSDCVLYYYLTKKNEN) constitute an SANT 1 domain. Over residues 483-493 (VRRNYPKRRGR) the composition is skewed to basic residues. Disordered stretches follow at residues 483-649 (VRRN…GSKS), 668-912 (NLLQ…FGSR), 1075-1122 (SLSD…GTPG), 1417-1436 (DLVS…IMEG), 1470-1583 (SWGV…QRES), 1737-1851 (PGTQ…AQES), and 1916-1990 (PQME…TAHT). Composition is skewed to basic and acidic residues over residues 502-525 (SQEE…KEDE) and 535-548 (KEEL…KIDA). Residues 502 to 552 (SQEEKEIEKVEEEKADRNDKKEDERREEEEKEEKEELREGAKDKIDAVAED) adopt a coiled-coil conformation. Residues 582 to 611 (ASEAAAANAVTTATTAPVTTTSTATTVAPV) show a composition bias toward low complexity. Pro residues predominate over residues 612–627 (PVAPPPEEPTPPPPPQ). One can recognise an SANT 2 domain in the interval 628 to 665 (EQSLVDHGRNWGAIAKMVGSKSESQCKNFYFNYKRRHN). Over residues 689-699 (QCDSIASTVSA) the composition is skewed to polar residues. Over residues 700–719 (QEDDENEASNEEENPEDSEG) the composition is skewed to acidic residues. Low complexity-rich tracts occupy residues 727–738 (ESAPSPSPAEAA) and 761–774 (DAAS…SPSP). The segment covering 854–863 (MERLMDRAEA) has biased composition (basic and acidic residues). Polar residues-rich tracts occupy residues 872-891 (QNIS…SATC) and 1102-1122 (ATSS…GTPG). Basic and acidic residues predominate over residues 1484–1501 (KMGERSKHEDTKSSDAIR). Over residues 1505 to 1516 (TSVVSSGPSVLR) the composition is skewed to polar residues. Residues 1545–1558 (PSPMSRSSPMARSA) are compositionally biased toward low complexity. A coiled-coil region spans residues 1765–1804 (VSAERERERERERERDREREKEQRERESDRERERDRLAHA). The span at 1767–1802 (AERERERERERERDREREKEQRERESDRERERDRLA) shows a compositional bias: basic and acidic residues. 2 stretches are compositionally biased toward low complexity: residues 1803 to 1813 (HAAAAAAAASA) and 1820 to 1835 (RPVS…RPSS). The segment covering 1842-1851 (PSPSVRAQES) has biased composition (polar residues). Basic and acidic residues predominate over residues 1921 to 1942 (AKPKESKNDSARSEENLSRRNA). Residues 1958 to 1980 (SPYTSSSFSSSKSQSQPSSAVYS) are compositionally biased toward low complexity. Residues 2012–2016 (IDVII) carry the CORNR box 1 motif. The tract at residues 2022 to 2109 (SDKDGRERNS…SPPQQTIPGH (88 aa)) is disordered. Residues 2031 to 2040 (SQSSDASSSH) show a composition bias toward low complexity. Positions 2043–2052 (HRYEAPRETI) are enriched in basic and acidic residues. Positions 2093 to 2106 (RYRQQQESPPQQTI) are enriched in polar residues. The CORNR box 2 signature appears at 2123-2127 (ICHII). Residues 2136–2145 (PVNQPLQQPP) show a composition bias toward low complexity. A disordered region spans residues 2136 to 2222 (PVNQPLQQPP…PISPPQAPML (87 aa)). The segment covering 2146 to 2175 (ASTFQSTNPTSTAVRTKASSRFSPESQVQP) has biased composition (polar residues). Positions 2190-2209 (IPDKPRGRPGKSPDRGHISE) are enriched in basic and acidic residues. The CORNR box 3 motif lies at 2326-2330 (LEDII). 2 disordered regions span residues 2344–2446 (DHGV…YNPL) and 2464–2498 (TSMT…DSDE). The segment covering 2353–2362 (QGNQSGTPNS) has biased composition (polar residues). Positions 2380-2394 (HKQKLISKYGSRKTK) are enriched in basic residues. Composition is skewed to polar residues over residues 2464–2476 (TSMT…QQSR) and 2489–2498 (QYETLSDSDE).

Belongs to the N-CoR nuclear receptor corepressors family. Forms a large corepressor complex that contains sin3a/b, histone deacetylases hdac1 and hdac2, rbbp4 and possibly rbbp7. Interacts with the thyroid receptor (TR, composed of rxra and thrb) and the retinoid acid receptor (RAR, composed of rxra and rara) in the absence of ligand. Interacts with tbl1xr1-A and possibly tbl1xr1-B. Interacts with zbtb33/kaiso.

The protein localises to the nucleus. Functionally, mediates transcriptional repression by certain nuclear receptors. Participates in complexes which promote histone deacetylation and the formation of repressive chromatin structures which may impede access by the basal transcription machinery. In association with hdac3, may play a role in the regulation of the circadian clock. The sequence is that of Nuclear receptor corepressor 1 (ncor1) from Xenopus laevis (African clawed frog).